The sequence spans 711 residues: 1,4-alpha-glucan branching enzyme GlgB (711 aa).

The Nucleophile role is filled by Asp-392. Glu-443 serves as the catalytic Proton donor.

The protein belongs to the glycosyl hydrolase 13 family. GlgB subfamily. As to quaternary structure, monomer.

The enzyme catalyses Transfers a segment of a (1-&gt;4)-alpha-D-glucan chain to a primary hydroxy group in a similar glucan chain.. It participates in glycan biosynthesis; glycogen biosynthesis. In terms of biological role, catalyzes the formation of the alpha-1,6-glucosidic linkages in glycogen by scission of a 1,4-alpha-linked oligosaccharide from growing alpha-1,4-glucan chains and the subsequent attachment of the oligosaccharide to the alpha-1,6 position. The protein is 1,4-alpha-glucan branching enzyme GlgB of Corynebacterium jeikeium (strain K411).